Consider the following 173-residue polypeptide: Transcription factor E (173 aa).

In terms of domain architecture, HTH TFE/IIEalpha-type spans 6-89; the sequence is PLEELLEFVR…YWYVDRETLN (84 aa).

This sequence belongs to the TFE family. Monomer. Interaction with RNA polymerase subunits RpoF and RpoE is necessary for Tfe stimulatory transcription activity. Able to interact with Tbp and RNA polymerase in the absence of DNA promoter. Interacts both with the preinitiation and elongation complexes.

Its function is as follows. Transcription factor that plays a role in the activation of archaeal genes transcribed by RNA polymerase. Facilitates transcription initiation by enhancing TATA-box recognition by TATA-box-binding protein (Tbp), and transcription factor B (Tfb) and RNA polymerase recruitment. Not absolutely required for transcription in vitro, but particularly important in cases where Tbp or Tfb function is not optimal. It dynamically alters the nucleic acid-binding properties of RNA polymerases by stabilizing the initiation complex and destabilizing elongation complexes. Seems to translocate with the RNA polymerase following initiation and acts by binding to the non template strand of the transcription bubble in elongation complexes. This chain is Transcription factor E, found in Ignicoccus hospitalis (strain KIN4/I / DSM 18386 / JCM 14125).